Consider the following 856-residue polypeptide: Translation initiation factor IF-2 (856 aa).

Residues 356-526 form the tr-type G domain; it reads PRAPVVTVMG…LLIADLLELK (171 aa). The G1 stretch occupies residues 365 to 372; the sequence is GHVDHGKT. 365-372 serves as a coordination point for GTP; it reads GHVDHGKT. The interval 390–394 is G2; that stretch reads GITQH. The G3 stretch occupies residues 412–415; it reads DTPG. GTP-binding positions include 412–416 and 466–469; these read DTPGH and NKID. The interval 466–469 is G4; it reads NKID. The interval 502–504 is G5; that stretch reads SAK.

Belongs to the TRAFAC class translation factor GTPase superfamily. Classic translation factor GTPase family. IF-2 subfamily.

It is found in the cytoplasm. Functionally, one of the essential components for the initiation of protein synthesis. Protects formylmethionyl-tRNA from spontaneous hydrolysis and promotes its binding to the 30S ribosomal subunits. Also involved in the hydrolysis of GTP during the formation of the 70S ribosomal complex. The chain is Translation initiation factor IF-2 from Ehrlichia ruminantium (strain Welgevonden).